A 435-amino-acid chain; its full sequence is Serine--tRNA ligase (435 aa).

238–240 (TAE) serves as a coordination point for L-serine. An ATP-binding site is contributed by 269–271 (RAE). Glutamate 292 contributes to the L-serine binding site. Residue 356–359 (EISS) coordinates ATP. Serine 392 lines the L-serine pocket.

It belongs to the class-II aminoacyl-tRNA synthetase family. Type-1 seryl-tRNA synthetase subfamily. Homodimer. The tRNA molecule binds across the dimer.

It is found in the cytoplasm. It catalyses the reaction tRNA(Ser) + L-serine + ATP = L-seryl-tRNA(Ser) + AMP + diphosphate + H(+). It carries out the reaction tRNA(Sec) + L-serine + ATP = L-seryl-tRNA(Sec) + AMP + diphosphate + H(+). It functions in the pathway aminoacyl-tRNA biosynthesis; selenocysteinyl-tRNA(Sec) biosynthesis; L-seryl-tRNA(Sec) from L-serine and tRNA(Sec): step 1/1. Its function is as follows. Catalyzes the attachment of serine to tRNA(Ser). Is also able to aminoacylate tRNA(Sec) with serine, to form the misacylated tRNA L-seryl-tRNA(Sec), which will be further converted into selenocysteinyl-tRNA(Sec). This is Serine--tRNA ligase from Methylobacterium sp. (strain 4-46).